We begin with the raw amino-acid sequence, 194 residues long: 23 kDa U4/U6.U5 small nuclear ribonucleoprotein component (194 aa).

The C2H2-type zinc-finger motif lies at Phe-80 to His-104.

Component of the U4/U6-U5 tri-snRNP complex composed of the U4, U6 and U5 snRNAs and at least PRP3, PRP4, PRP6, PRP8, PRP18, PRP31, PRP38, SNU13, SNU23, SNU66, SNU114, SPP381, SMB1, SMD1, SMD2, SMD3, SMX2, SMX3, LSM2, LSM3, LSM4, LSM5, LSM6, LSM7, LSM8, BRR2 and DIB1.

It is found in the nucleus. Participates in pre-mRNA splicing. Part of the U4/U5/U6 tri-snRNP complex, one of the building blocks of the spliceosome. This is 23 kDa U4/U6.U5 small nuclear ribonucleoprotein component (SNU23) from Saccharomyces cerevisiae (strain ATCC 204508 / S288c) (Baker's yeast).